The chain runs to 462 residues: Ribosomal protein uS12 methylthiotransferase RimO (462 aa).

One can recognise an MTTase N-terminal domain in the interval 10-125 (PRIGMVSLGC…VLDAVHRNLP (116 aa)). Residues Cys-19, Cys-55, Cys-84, Cys-160, Cys-164, and Cys-167 each contribute to the [4Fe-4S] cluster site. A Radical SAM core domain is found at 146–388 (LTPRHYAYLK…AVAEALSSAK (243 aa)). The region spanning 390–462 (QRRVGATMQV…RGHDLLAQPI (73 aa)) is the TRAM domain.

It belongs to the methylthiotransferase family. RimO subfamily. [4Fe-4S] cluster serves as cofactor.

Its subcellular location is the cytoplasm. It catalyses the reaction L-aspartate(89)-[ribosomal protein uS12]-hydrogen + (sulfur carrier)-SH + AH2 + 2 S-adenosyl-L-methionine = 3-methylsulfanyl-L-aspartate(89)-[ribosomal protein uS12]-hydrogen + (sulfur carrier)-H + 5'-deoxyadenosine + L-methionine + A + S-adenosyl-L-homocysteine + 2 H(+). Functionally, catalyzes the methylthiolation of an aspartic acid residue of ribosomal protein uS12. This is Ribosomal protein uS12 methylthiotransferase RimO from Verminephrobacter eiseniae (strain EF01-2).